The chain runs to 288 residues: Co-chaperone protein DjlA (288 aa).

Over 1–6 (MNFIGK) the chain is Periplasmic. The helical transmembrane segment at 7 to 30 (ILGFIIGYRFGGLFGGIAGLILGH) threads the bilayer. Residues 31–288 (IADKKLYELG…DLICKVKGWK (258 aa)) are Cytoplasmic-facing. Residues 222-288 (DAYKVLGVNA…DLICKVKGWK (67 aa)) form the J domain.

Homodimer.

It localises to the cell inner membrane. Its function is as follows. Regulatory DnaK co-chaperone. Direct interaction between DnaK and DjlA is needed for the induction of the wcaABCDE operon, involved in the synthesis of a colanic acid polysaccharide capsule, possibly through activation of the RcsB/RcsC phosphotransfer signaling pathway. The colanic acid capsule may help the bacterium survive conditions outside the host. The sequence is that of Co-chaperone protein DjlA from Mannheimia succiniciproducens (strain KCTC 0769BP / MBEL55E).